The primary structure comprises 307 residues: Nitrogenase iron protein 2 (307 aa).

Gly13–Ser20 contacts ATP. Residue Cys101 coordinates [4Fe-4S] cluster. Arg104 is modified (ADP-ribosylarginine; by dinitrogenase reductase ADP-ribosyltransferase). Cys135 is a [4Fe-4S] cluster binding site. The disordered stretch occupies residues Gln285–Ala307.

Belongs to the NifH/BchL/ChlL family. As to quaternary structure, homodimer. The cofactor is [4Fe-4S] cluster. In terms of processing, the reversible ADP-ribosylation of Arg-104 inactivates the nitrogenase reductase and regulates nitrogenase activity.

It catalyses the reaction N2 + 8 reduced [2Fe-2S]-[ferredoxin] + 16 ATP + 16 H2O = H2 + 8 oxidized [2Fe-2S]-[ferredoxin] + 2 NH4(+) + 16 ADP + 16 phosphate + 6 H(+). Its function is as follows. The key enzymatic reactions in nitrogen fixation are catalyzed by the nitrogenase complex, which has 2 components: the iron protein and the molybdenum-iron protein. In Mastigocladus laminosus (Fischerella sp.), this protein is Nitrogenase iron protein 2 (nifH2).